The chain runs to 83 residues: Small ribosomal subunit protein bS16 (83 aa).

It belongs to the bacterial ribosomal protein bS16 family.

This is Small ribosomal subunit protein bS16 from Borrelia turicatae (strain 91E135).